A 464-amino-acid polypeptide reads, in one-letter code: tRNA(Ile)-lysidine synthase (464 aa).

S26–S31 provides a ligand contact to ATP.

Belongs to the tRNA(Ile)-lysidine synthase family.

It is found in the cytoplasm. The enzyme catalyses cytidine(34) in tRNA(Ile2) + L-lysine + ATP = lysidine(34) in tRNA(Ile2) + AMP + diphosphate + H(+). In terms of biological role, ligates lysine onto the cytidine present at position 34 of the AUA codon-specific tRNA(Ile) that contains the anticodon CAU, in an ATP-dependent manner. Cytidine is converted to lysidine, thus changing the amino acid specificity of the tRNA from methionine to isoleucine. In Geobacillus kaustophilus (strain HTA426), this protein is tRNA(Ile)-lysidine synthase.